The following is a 273-amino-acid chain: NAD(P)H-hydrate epimerase (273 aa).

A YjeF N-terminal domain is found at 18–257 (ALKLDEDLIN…LLAMEYDVQE (240 aa)). 71–75 (NNGGD) contacts (6S)-NADPHX. K(+)-binding residues include N72 and D146. Residues 150–157 (GFSFHGGP), Y162, and D188 contribute to the (6S)-NADPHX site. S191 lines the K(+) pocket.

This sequence belongs to the NnrE/AIBP family. K(+) serves as cofactor.

The enzyme catalyses (6R)-NADHX = (6S)-NADHX. The catalysed reaction is (6R)-NADPHX = (6S)-NADPHX. Functionally, catalyzes the epimerization of the S- and R-forms of NAD(P)HX, a damaged form of NAD(P)H that is a result of enzymatic or heat-dependent hydration. This is a prerequisite for the S-specific NAD(P)H-hydrate dehydratase to allow the repair of both epimers of NAD(P)HX. The chain is NAD(P)H-hydrate epimerase from Giardia intestinalis (strain ATCC 50803 / WB clone C6) (Giardia lamblia).